Consider the following 541-residue polypeptide: Light-independent protochlorophyllide reductase subunit B (541 aa).

Aspartate 36 is a binding site for [4Fe-4S] cluster. Catalysis depends on aspartate 286, which acts as the Proton donor. Residue 421 to 422 participates in substrate binding; that stretch reads GM.

This sequence belongs to the ChlB/BchB/BchZ family. As to quaternary structure, protochlorophyllide reductase is composed of three subunits; BchL, BchN and BchB. Forms a heterotetramer of two BchB and two BchN subunits. It depends on [4Fe-4S] cluster as a cofactor.

It catalyses the reaction chlorophyllide a + oxidized 2[4Fe-4S]-[ferredoxin] + 2 ADP + 2 phosphate = protochlorophyllide a + reduced 2[4Fe-4S]-[ferredoxin] + 2 ATP + 2 H2O. The protein operates within porphyrin-containing compound metabolism; bacteriochlorophyll biosynthesis (light-independent). Its function is as follows. Component of the dark-operative protochlorophyllide reductase (DPOR) that uses Mg-ATP and reduced ferredoxin to reduce ring D of protochlorophyllide (Pchlide) to form chlorophyllide a (Chlide). This reaction is light-independent. The NB-protein (BchN-BchB) is the catalytic component of the complex. The sequence is that of Light-independent protochlorophyllide reductase subunit B from Chloroflexus aurantiacus (strain ATCC 29364 / DSM 637 / Y-400-fl).